A 122-amino-acid chain; its full sequence is Urocortin (122 aa).

An N-terminal signal peptide occupies residues 1–25 (MIQRGRATLLVALLLLAQLRPESSQ). A propeptide spanning residues 26–80 (WSPAAAAATGVQDPNLRWSPGVRNQGGGVRALLLLLAERFPRRAGSEPAGERQRR) is cleaved from the precursor. Residue Val-120 is modified to Valine amide.

The protein belongs to the sauvagine/corticotropin-releasing factor/urotensin I family. Interacts with CRHR1 and CRHR2 (via their N-terminal extracellular domain). In terms of tissue distribution, in the organ of Corti, detected in the inner hair cell region (at protein level). Expressed in skin (at protein level).

The protein resides in the secreted. Its function is as follows. Acts in vitro to stimulate the secretion of adrenocorticotropic hormone (ACTH). Binds with high affinity to CRF receptor types 1, 2-alpha, and 2-beta. Plays a role in the establishment of normal hearing thresholds. Reduces food intake and regulates ghrelin levels in gastric body and plasma. The polypeptide is Urocortin (Ucn) (Mus musculus (Mouse)).